The sequence spans 650 residues: MAGARAAAAAASAGSSASSGNQPPQELGLGELLEEFSRTQYRAKDGSGTGGSKVERIEKRCLELFGRDYCFSVIPNTNGDICGHYPRHIVFLEYESSEKEKDTFESTVQVSKLQDLIHRSKMARCRGRFVCPVILFKGKHICRSATLAGWGELYGRSGYNYFFSGGADDAWADVEDVTEEDCALRSGDTHLFDKVRGYDIKLLRYLSVKYICDLMVENKKVKFGMNVTSSEKVDKAQRYADFTLLSIPYPGCEFFKEYKDRDYMAEGLIFNWKQDYVDAPLSIPDFLTHSLNIDWSQYQCWDLVQQTQNYLKLLLSLVNSDDDSGLLVHCISGWDRTPLFISLLRLSLWADGLIHTSLKPTEILYLTVAYDWFLFGHMLVDRLSKGEEIFFFCFNFLKHITSEEFSALKTQRRKSLPARDGGFTLEDICMLRRKDRGSTTSLGSDFSLVMESSPGATGSFTYEAVELVPAGAPTQAAWRKSHSSSPQSVLWNRPQPSEDRLPSQQGLAEARSSSSSSSNHSDNFFRMGSSPLEVPKPRSVDHPLPGSSLSTDYGSWQMVTGCGSIQERAVLHTDSSLPFSFPDELPNSCLLAALSDRETRLQEVRSAFLAAYSSTVGLRAVAPSPSGAIGGLLEQFARGVGLRSISSNAL.

Residues 1–27 (MAGARAAAAAASAGSSASSGNQPPQEL) are disordered. K194 bears the N6-acetyllysine mark. N-linked (GlcNAc...) asparagine glycosylation occurs at N226. C330 serves as the catalytic Phosphocysteine intermediate. Positions 333, 334, 335, 336, and 382 each coordinate a 1,2-diacyl-sn-glycero-3-phospho-(1D-myo-inositol-3,5-bisphosphate). The a 1,2-diacyl-sn-glycero-3-phospho-(1D-myo-inositol-3-phosphate) site is built by G333, W334, D335, R336, and R382. The disordered stretch occupies residues 476-546 (AAWRKSHSSS…PRSVDHPLPG (71 aa)). S518 is modified (phosphoserine). N-linked (GlcNAc...) asparagine glycosylation is present at N519. Residues S530, S580, and S624 each carry the phosphoserine modification. R638 carries the post-translational modification Omega-N-methylarginine.

Belongs to the protein-tyrosine phosphatase family. Non-receptor class myotubularin subfamily. Expressed in various tissues, including heart, skeletal muscle, placenta, liver, lung, kidney and pancreas.

The protein localises to the cytoplasm. The enzyme catalyses a 1,2-diacyl-sn-glycero-3-phospho-(1D-myo-inositol-3,5-bisphosphate) + H2O = a 1,2-diacyl-sn-glycero-3-phospho-(1D-myo-inositol-5-phosphate) + phosphate. It catalyses the reaction a 1,2-diacyl-sn-glycero-3-phospho-(1D-myo-inositol-3-phosphate) + H2O = a 1,2-diacyl-sn-glycero-3-phospho-(1D-myo-inositol) + phosphate. Its function is as follows. Lipid phosphatase that specifically dephosphorylates the D-3 position of phosphatidylinositol 3-phosphate and phosphatidylinositol 3,5-bisphosphate, generating phosphatidylinositol and phosphatidylinositol 5-phosphate. The sequence is that of Phosphatidylinositol-3,5-bisphosphate 3-phosphatase MTMR14 from Homo sapiens (Human).